Here is a 784-residue protein sequence, read N- to C-terminus: LPS-assembly protein LptD (784 aa).

An N-terminal signal peptide occupies residues Met1 to Ala24. Disulfide bonds link Cys31–Cys724 and Cys173–Cys725.

The protein belongs to the LptD family. In terms of assembly, component of the lipopolysaccharide transport and assembly complex. Interacts with LptE and LptA. Contains two intramolecular disulfide bonds.

The protein localises to the cell outer membrane. Together with LptE, is involved in the assembly of lipopolysaccharide (LPS) at the surface of the outer membrane. In Escherichia coli O6:K15:H31 (strain 536 / UPEC), this protein is LPS-assembly protein LptD.